An 86-amino-acid polypeptide reads, in one-letter code: Small ribosomal subunit protein uS17 (86 aa).

It belongs to the universal ribosomal protein uS17 family. In terms of assembly, part of the 30S ribosomal subunit.

Its function is as follows. One of the primary rRNA binding proteins, it binds specifically to the 5'-end of 16S ribosomal RNA. The chain is Small ribosomal subunit protein uS17 from Caldicellulosiruptor bescii (strain ATCC BAA-1888 / DSM 6725 / KCTC 15123 / Z-1320) (Anaerocellum thermophilum).